Consider the following 499-residue polypeptide: Putative ribose/galactose/methyl galactoside import ATP-binding protein 3 (499 aa).

ABC transporter domains lie at 8–243 (LRMR…VGRE) and 253–497 (SKIG…TGEE). 40–47 (GENGAGKS) contributes to the ATP binding site.

The protein belongs to the ABC transporter superfamily. Carbohydrate importer 2 (CUT2) (TC 3.A.1.2) family.

The protein resides in the cell inner membrane. It carries out the reaction D-ribose(out) + ATP + H2O = D-ribose(in) + ADP + phosphate + H(+). The enzyme catalyses D-galactose(out) + ATP + H2O = D-galactose(in) + ADP + phosphate + H(+). In terms of biological role, part of an ABC transporter complex involved in carbohydrate import. Could be involved in ribose, galactose and/or methyl galactoside import. Responsible for energy coupling to the transport system. This Agrobacterium fabrum (strain C58 / ATCC 33970) (Agrobacterium tumefaciens (strain C58)) protein is Putative ribose/galactose/methyl galactoside import ATP-binding protein 3.